A 95-amino-acid chain; its full sequence is UPF0358 protein BCE_3996 (95 aa).

This sequence belongs to the UPF0358 family.

The chain is UPF0358 protein BCE_3996 from Bacillus cereus (strain ATCC 10987 / NRS 248).